The primary structure comprises 474 residues: Probable glycine dehydrogenase (decarboxylating) subunit 2 (474 aa).

Residue Lys262 is modified to N6-(pyridoxal phosphate)lysine.

The protein belongs to the GcvP family. C-terminal subunit subfamily. The glycine cleavage system is composed of four proteins: P, T, L and H. In this organism, the P 'protein' is a heterodimer of two subunits. It depends on pyridoxal 5'-phosphate as a cofactor.

The enzyme catalyses N(6)-[(R)-lipoyl]-L-lysyl-[glycine-cleavage complex H protein] + glycine + H(+) = N(6)-[(R)-S(8)-aminomethyldihydrolipoyl]-L-lysyl-[glycine-cleavage complex H protein] + CO2. In terms of biological role, the glycine cleavage system catalyzes the degradation of glycine. The P protein binds the alpha-amino group of glycine through its pyridoxal phosphate cofactor; CO(2) is released and the remaining methylamine moiety is then transferred to the lipoamide cofactor of the H protein. This chain is Probable glycine dehydrogenase (decarboxylating) subunit 2, found in Thermotoga maritima (strain ATCC 43589 / DSM 3109 / JCM 10099 / NBRC 100826 / MSB8).